Reading from the N-terminus, the 610-residue chain is Myoneurin (610 aa).

A BTB domain is found at 24 to 89; sequence CDCTVVIGEF…IYTGTLNLDS (66 aa). The disordered stretch occupies residues 156–199; that stretch reads SEVSTDSVQANPKPRALTKKSSQSKKKKKAFSSQKPGQSKAVQY. Positions 171-185 are enriched in basic residues; sequence ALTKKSSQSKKKKKA. Short sequence motifs (nuclear localization signal) lie at residues 174-190 and 257-262; these read KKSS…SSQK and KRKRRK. 8 C2H2-type zinc fingers span residues 302-324, 330-352, 358-381, 387-409, 415-437, 443-465, 471-493, and 499-522; these read PMCN…MRIH, YVCH…VRTH, YKCE…RMHH, YKCD…ARKH, YVCD…VRRH, YVCD…SRKH, YICG…FRSH, and FICE…TKVH. A disordered region spans residues 519 to 548; it reads TKVHSGTDKNPDCSVDDHAVSEQDSVQRSP. Basic and acidic residues predominate over residues 523–539; the sequence is SGTDKNPDCSVDDHAVS.

This sequence belongs to the krueppel C2H2-type zinc-finger protein family. Mainly expressed in the neuromuscular system. Located in and around synaptic myonuclei in adult muscle. Expression is dysregulated after nerve injury. Also found in the cerebellum, testis, heart, brain and liver.

The protein resides in the nucleus. This is Myoneurin (Mynn) from Mus musculus (Mouse).